We begin with the raw amino-acid sequence, 307 residues long: High-affinity branched-chain amino acid transport system permease protein BraD (307 aa).

The next 10 helical transmembrane spans lie at 21–41 (YALI…INFA), 45–65 (VYMI…MMGL), 70–90 (LMML…GYSI), 104–124 (LIPL…VMLS), 132–152 (IPTL…GVVI), 154–174 (YMQI…TLFI), 203–223 (IIAL…VLLG), 224–244 (MQYG…AFTA), 245–265 (AVLG…LLGV), and 280–300 (DVVA…GILG).

It belongs to the binding-protein-dependent transport system permease family. LivHM subfamily.

The protein resides in the cell inner membrane. Its function is as follows. Component of the high affinity leucine, isoleucine, valine, transport system (LIV-I), which is operative without Na(+) and is specific for alanine and threonine, in addition to branched-chain amino acids. The protein is High-affinity branched-chain amino acid transport system permease protein BraD (braD) of Pseudomonas aeruginosa (strain ATCC 15692 / DSM 22644 / CIP 104116 / JCM 14847 / LMG 12228 / 1C / PRS 101 / PAO1).